The primary structure comprises 473 residues: Siroheme synthase (473 aa).

Residues methionine 1–leucine 203 form a precorrin-2 dehydrogenase /sirohydrochlorin ferrochelatase region. NAD(+) is bound by residues alanine 22–valine 23 and proline 43–arginine 44. Residue serine 128 is modified to Phosphoserine. The interval glycine 216–alanine 473 is uroporphyrinogen-III C-methyltransferase. Residue proline 225 participates in S-adenosyl-L-methionine binding. The active-site Proton acceptor is the aspartate 248. Lysine 270 acts as the Proton donor in catalysis. Residues glycine 302–aspartate 304, isoleucine 307, threonine 332–alanine 333, methionine 384, and glycine 413 each bind S-adenosyl-L-methionine.

This sequence in the N-terminal section; belongs to the precorrin-2 dehydrogenase / sirohydrochlorin ferrochelatase family. It in the C-terminal section; belongs to the precorrin methyltransferase family.

The enzyme catalyses uroporphyrinogen III + 2 S-adenosyl-L-methionine = precorrin-2 + 2 S-adenosyl-L-homocysteine + H(+). It catalyses the reaction precorrin-2 + NAD(+) = sirohydrochlorin + NADH + 2 H(+). It carries out the reaction siroheme + 2 H(+) = sirohydrochlorin + Fe(2+). It functions in the pathway cofactor biosynthesis; adenosylcobalamin biosynthesis; precorrin-2 from uroporphyrinogen III: step 1/1. The protein operates within cofactor biosynthesis; adenosylcobalamin biosynthesis; sirohydrochlorin from precorrin-2: step 1/1. It participates in porphyrin-containing compound metabolism; siroheme biosynthesis; precorrin-2 from uroporphyrinogen III: step 1/1. Its pathway is porphyrin-containing compound metabolism; siroheme biosynthesis; siroheme from sirohydrochlorin: step 1/1. It functions in the pathway porphyrin-containing compound metabolism; siroheme biosynthesis; sirohydrochlorin from precorrin-2: step 1/1. Functionally, multifunctional enzyme that catalyzes the SAM-dependent methylations of uroporphyrinogen III at position C-2 and C-7 to form precorrin-2 via precorrin-1. Then it catalyzes the NAD-dependent ring dehydrogenation of precorrin-2 to yield sirohydrochlorin. Finally, it catalyzes the ferrochelation of sirohydrochlorin to yield siroheme. The polypeptide is Siroheme synthase (Bordetella pertussis (strain Tohama I / ATCC BAA-589 / NCTC 13251)).